We begin with the raw amino-acid sequence, 599 residues long: Elongation factor 4 (599 aa).

Residues S5–V187 enclose the tr-type G domain. Residues D17 to T22 and N134 to D137 each bind GTP.

Belongs to the TRAFAC class translation factor GTPase superfamily. Classic translation factor GTPase family. LepA subfamily.

The protein resides in the cell inner membrane. The enzyme catalyses GTP + H2O = GDP + phosphate + H(+). Required for accurate and efficient protein synthesis under certain stress conditions. May act as a fidelity factor of the translation reaction, by catalyzing a one-codon backward translocation of tRNAs on improperly translocated ribosomes. Back-translocation proceeds from a post-translocation (POST) complex to a pre-translocation (PRE) complex, thus giving elongation factor G a second chance to translocate the tRNAs correctly. Binds to ribosomes in a GTP-dependent manner. The chain is Elongation factor 4 from Saccharophagus degradans (strain 2-40 / ATCC 43961 / DSM 17024).